A 271-amino-acid chain; its full sequence is 4-hydroxy-tetrahydrodipicolinate reductase (271 aa).

Residue 10–15 participates in NAD(+) binding; sequence GAAGRM. Arginine 37 is an NADP(+) binding site. NAD(+)-binding positions include 100-102 and 124-127; these read GTT and SGNM. Catalysis depends on histidine 157, which acts as the Proton donor/acceptor. Residue histidine 158 participates in (S)-2,3,4,5-tetrahydrodipicolinate binding. Lysine 161 functions as the Proton donor in the catalytic mechanism. (S)-2,3,4,5-tetrahydrodipicolinate is bound at residue 167–168; that stretch reads GT. The disordered stretch occupies residues 183 to 202; it reads SLSEHEQRGRDGHTGPRKDG. The span at 185-202 shows a compositional bias: basic and acidic residues; the sequence is SEHEQRGRDGHTGPRKDG.

It belongs to the DapB family.

The protein resides in the cytoplasm. It carries out the reaction (S)-2,3,4,5-tetrahydrodipicolinate + NAD(+) + H2O = (2S,4S)-4-hydroxy-2,3,4,5-tetrahydrodipicolinate + NADH + H(+). The catalysed reaction is (S)-2,3,4,5-tetrahydrodipicolinate + NADP(+) + H2O = (2S,4S)-4-hydroxy-2,3,4,5-tetrahydrodipicolinate + NADPH + H(+). Its pathway is amino-acid biosynthesis; L-lysine biosynthesis via DAP pathway; (S)-tetrahydrodipicolinate from L-aspartate: step 4/4. Functionally, catalyzes the conversion of 4-hydroxy-tetrahydrodipicolinate (HTPA) to tetrahydrodipicolinate. In Beijerinckia indica subsp. indica (strain ATCC 9039 / DSM 1715 / NCIMB 8712), this protein is 4-hydroxy-tetrahydrodipicolinate reductase.